Here is a 140-residue protein sequence, read N- to C-terminus: MKKILQEFKQFAMRGNVVDMAVGIIIGGAFGKIVSSIVADLIMPAVGLLVGGVNFTDLKITLKHAVMEGDKVISPAVSINYGNFIQVTLDFIIIAFAVFLLVKGVNALSKKKEEAPKAPVAPPADIQLLTEIRDLLKNNK.

2 helical membrane-spanning segments follow: residues 11 to 31 (FAMR…GAFG) and 82 to 102 (GNFI…FLLV).

The protein belongs to the MscL family. As to quaternary structure, homopentamer.

The protein localises to the cell inner membrane. Functionally, channel that opens in response to stretch forces in the membrane lipid bilayer. May participate in the regulation of osmotic pressure changes within the cell. The polypeptide is Large-conductance mechanosensitive channel (Parabacteroides distasonis (strain ATCC 8503 / DSM 20701 / CIP 104284 / JCM 5825 / NCTC 11152)).